The chain runs to 484 residues: Cysteine--tRNA ligase (484 aa).

C27 is a Zn(2+) binding site. The 'HIGH' region signature appears at 29 to 39 (PTTYNYIHLGN). The Zn(2+) site is built by C207, H232, and E236. The 'KMSKS' region motif lies at 264 to 268 (KMSKS). Residue K267 coordinates ATP.

The protein belongs to the class-I aminoacyl-tRNA synthetase family. Monomer. It depends on Zn(2+) as a cofactor.

Its subcellular location is the cytoplasm. The catalysed reaction is tRNA(Cys) + L-cysteine + ATP = L-cysteinyl-tRNA(Cys) + AMP + diphosphate. In Pelotomaculum thermopropionicum (strain DSM 13744 / JCM 10971 / SI), this protein is Cysteine--tRNA ligase.